A 206-amino-acid chain; its full sequence is MKAEVIKLDASSAGSIELDDAIFGLEPRADILHRVVRWQRAKAQAGTHSVLGKSDVSYSTKKIYRQKGTGGARHGSKKAPIFRHGGVYKGPTPRSHAHDLNKKFRALGLKHALSSKATTGNLIVIEDIAMSEAKTALLAKAVKELGWKRVLVIDGADINENFAKAARNLEGIDVLPSIGANVYDILKRDTLVITKAGVEALEARLK.

It belongs to the universal ribosomal protein uL4 family. In terms of assembly, part of the 50S ribosomal subunit.

Its function is as follows. One of the primary rRNA binding proteins, this protein initially binds near the 5'-end of the 23S rRNA. It is important during the early stages of 50S assembly. It makes multiple contacts with different domains of the 23S rRNA in the assembled 50S subunit and ribosome. In terms of biological role, forms part of the polypeptide exit tunnel. This is Large ribosomal subunit protein uL4 from Cereibacter sphaeroides (strain ATCC 17025 / ATH 2.4.3) (Rhodobacter sphaeroides).